The primary structure comprises 161 residues: Protein OPG060 (161 aa).

It belongs to the orthopoxvirus OPG058 family.

The polypeptide is Protein OPG060 (OPG060) (Homo sapiens (Human)).